The primary structure comprises 326 residues: Homeobox protein Hox-A1 (326 aa).

The Antp-type hexapeptide motif lies at T196–K201. Residues P221–E280 constitute a DNA-binding region (homeobox). Positions R273–G326 are disordered. A compositionally biased stretch (polar residues) spans T285 to A296. Positions N306–G326 are enriched in low complexity.

Belongs to the Antp homeobox family. Labial subfamily.

Its subcellular location is the nucleus. Functionally, sequence-specific transcription factor. Part of a developmental regulatory system that provides cells with specific positional identities on the anterior-posterior axis. Acts on the anterior body structures. Seems to act in the maintenance and/or generation of hindbrain segments. The sequence is that of Homeobox protein Hox-A1 (HOXA1) from Heterodontus francisci (Horn shark).